We begin with the raw amino-acid sequence, 1087 residues long: Alpha-mannosidase G (1087 aa).

Residues H264, D266, D376, and H579 each coordinate Zn(2+). D376 serves as the catalytic Nucleophile.

This sequence belongs to the glycosyl hydrolase 38 family. Zn(2+) serves as cofactor.

The catalysed reaction is Hydrolysis of terminal, non-reducing alpha-D-mannose residues in alpha-D-mannosides.. The sequence is that of Alpha-mannosidase G (manG) from Dictyostelium discoideum (Social amoeba).